The chain runs to 173 residues: Small ribosomal subunit protein uS5 (173 aa).

Residues 16-79 (LSELLVSVRR…NAAKKNMIRV (64 aa)) form the S5 DRBM domain.

This sequence belongs to the universal ribosomal protein uS5 family. In terms of assembly, part of the 30S ribosomal subunit. Contacts proteins S4 and S8.

With S4 and S12 plays an important role in translational accuracy. In terms of biological role, located at the back of the 30S subunit body where it stabilizes the conformation of the head with respect to the body. The chain is Small ribosomal subunit protein uS5 from Anaplasma phagocytophilum (strain HZ).